Consider the following 93-residue polypeptide: Molybdopterin synthase sulfur carrier subunit (93 aa).

At Gly93 the chain carries 1-thioglycine; alternate. Residue Gly93 is modified to Glycyl adenylate; alternate.

Belongs to the MoaD family. MOCS2A subfamily. Heterotetramer; composed of 2 small (MOCS2A) and 2 large (MOCS2B) subunits. In terms of processing, C-terminal thiocarboxylation occurs in 2 steps, it is first acyl-adenylated (-COAMP) via the hesA/moeB/thiF part of UBA4, then thiocarboxylated (-COSH) via the rhodanese domain of UBA4.

The protein localises to the cytoplasm. It functions in the pathway cofactor biosynthesis; molybdopterin biosynthesis. Acts as a sulfur carrier required for molybdopterin biosynthesis. Component of the molybdopterin synthase complex that catalyzes the conversion of precursor Z into molybdopterin by mediating the incorporation of 2 sulfur atoms into precursor Z to generate a dithiolene group. In the complex, serves as sulfur donor by being thiocarboxylated (-COSH) at its C-terminus by UBA4. After interaction with MOCS2B, the sulfur is then transferred to precursor Z to form molybdopterin. The polypeptide is Molybdopterin synthase sulfur carrier subunit (Mycosarcoma maydis (Corn smut fungus)).